We begin with the raw amino-acid sequence, 516 residues long: uncharacterized protein (516 aa).

Residues 1-17 (MSVWVALALLGMCVSCT) form the signal peptide. Disordered stretches follow at residues 29-197 (KEPP…EVPR) and 296-426 (RTVS…RDHL). Positions 71–85 (RVPESSQEREQKPES) are enriched in basic and acidic residues. Positions 122–144 (VAPPAPPAPTAPRPHRPSPPPVS) are enriched in pro residues. Residues 145–155 (PSASKPKQRAV) are compositionally biased toward low complexity. Basic and acidic residues predominate over residues 351–367 (KAQHGTPRPDEKKDREP). Low complexity predominate over residues 394–406 (SPASQPSAPSAAP). Basic and acidic residues predominate over residues 415–426 (AHKEGQEKRDHL).

This is an uncharacterized protein from Treponema pallidum (strain Nichols).